Here is a 331-residue protein sequence, read N- to C-terminus: 6-phosphogluconolactonase (331 aa).

It belongs to the cycloisomerase 2 family.

It carries out the reaction 6-phospho-D-glucono-1,5-lactone + H2O = 6-phospho-D-gluconate + H(+). It functions in the pathway carbohydrate degradation; pentose phosphate pathway; D-ribulose 5-phosphate from D-glucose 6-phosphate (oxidative stage): step 2/3. Functionally, catalyzes the hydrolysis of 6-phosphogluconolactone to 6-phosphogluconate. The protein is 6-phosphogluconolactonase of Enterobacter sp. (strain 638).